Consider the following 455-residue polypeptide: Tubulin delta chain (455 aa).

Ala-143 to Gly-149 provides a ligand contact to GTP.

The protein belongs to the tubulin family. In terms of assembly, found in a complex with TEDC1, TEDC2, TUBE1 and TUBD1. In terms of tissue distribution, highly expressed in testis.

It localises to the cell projection. It is found in the cilium. Its subcellular location is the cytoplasm. The protein resides in the cytoskeleton. The protein localises to the microtubule organizing center. It localises to the centrosome. It is found in the centriole. Its subcellular location is the nucleus. Its function is as follows. Acts as a positive regulator of hedgehog signaling and regulates ciliary function. The protein is Tubulin delta chain (Tubd1) of Mus musculus (Mouse).